We begin with the raw amino-acid sequence, 388 residues long: Chaperone protein DnaJ (388 aa).

The J domain maps to 5-70; it reads DYYEVLGVAR…QKRAAYDRFG (66 aa). A CR-type zinc finger spans residues 141–219; sequence GKTETIRLPT…CGGAGRVTRE (79 aa). Residues C154, C157, C171, C174, C193, C196, C207, and C210 each coordinate Zn(2+). CXXCXGXG motif repeat units follow at residues 154-161, 171-178, 193-200, and 207-214; these read CEVCAGSG, CPTCGGYG, CPNCHGRG, and CTACGGAG.

This sequence belongs to the DnaJ family. As to quaternary structure, homodimer. The cofactor is Zn(2+).

It is found in the cytoplasm. Its function is as follows. Participates actively in the response to hyperosmotic and heat shock by preventing the aggregation of stress-denatured proteins and by disaggregating proteins, also in an autonomous, DnaK-independent fashion. Unfolded proteins bind initially to DnaJ; upon interaction with the DnaJ-bound protein, DnaK hydrolyzes its bound ATP, resulting in the formation of a stable complex. GrpE releases ADP from DnaK; ATP binding to DnaK triggers the release of the substrate protein, thus completing the reaction cycle. Several rounds of ATP-dependent interactions between DnaJ, DnaK and GrpE are required for fully efficient folding. Also involved, together with DnaK and GrpE, in the DNA replication of plasmids through activation of initiation proteins. The chain is Chaperone protein DnaJ from Methylobacterium nodulans (strain LMG 21967 / CNCM I-2342 / ORS 2060).